A 274-amino-acid polypeptide reads, in one-letter code: MKIFIFYNPLKLSNDDLEENILKPFNESNIEVIGYAAAGSTVEEKQAQVADFFVIFGGDGTVLKIAEIAAIFSKPVIAVNTGNLGFLSSYSSSEIKELIEDIQKENISFSFRHLLECHVGTKKVVVLNDIVLLKSQPLGTMNVDVKIEEHTLFSFAGDGLIVSTPTGSTAYALSAGGPIIHPELNVVQLIPLAAHALNIRPFIAPPTQRIEIILKNMSKGFVYVTGDGDIIHRMEPGMSIFVTSSEMTIKLAQRNGNNYLNALDKKLGFGRRFE.

Aspartate 59 serves as the catalytic Proton acceptor. Residues 59–60, lysine 64, 128–129, aspartate 158, 169–174, and alanine 193 each bind NAD(+); these read DG, ND, and TAYALS.

It belongs to the NAD kinase family. Requires a divalent metal cation as cofactor.

It localises to the cytoplasm. The catalysed reaction is NAD(+) + ATP = ADP + NADP(+) + H(+). Its function is as follows. Involved in the regulation of the intracellular balance of NAD and NADP, and is a key enzyme in the biosynthesis of NADP. Catalyzes specifically the phosphorylation on 2'-hydroxyl of the adenosine moiety of NAD to yield NADP. The sequence is that of NAD kinase from Petrotoga mobilis (strain DSM 10674 / SJ95).